The sequence spans 378 residues: uncharacterized protein (378 aa).

The Guanylate cyclase domain occupies 208-317 (GIGFADLSSF…NPVNLAARLV (110 aa)).

Belongs to the adenylyl cyclase class-4/guanylyl cyclase family.

This is an uncharacterized protein from Mycobacterium bovis (strain ATCC BAA-935 / AF2122/97).